A 253-amino-acid chain; its full sequence is uncharacterized protein (253 aa).

This is an uncharacterized protein from Campylobacter jejuni subsp. jejuni serotype O:2 (strain ATCC 700819 / NCTC 11168).